Reading from the N-terminus, the 193-residue chain is Potassium-transporting ATPase KdpC subunit (193 aa).

A helical transmembrane segment spans residues 7-27 (PLVVIFAVLTVVTGMAYPAVM).

The protein belongs to the KdpC family. The system is composed of three essential subunits: KdpA, KdpB and KdpC.

The protein resides in the cell inner membrane. Its function is as follows. Part of the high-affinity ATP-driven potassium transport (or Kdp) system, which catalyzes the hydrolysis of ATP coupled with the electrogenic transport of potassium into the cytoplasm. This subunit acts as a catalytic chaperone that increases the ATP-binding affinity of the ATP-hydrolyzing subunit KdpB by the formation of a transient KdpB/KdpC/ATP ternary complex. This chain is Potassium-transporting ATPase KdpC subunit, found in Burkholderia vietnamiensis (strain G4 / LMG 22486) (Burkholderia cepacia (strain R1808)).